A 387-amino-acid polypeptide reads, in one-letter code: Testis-expressed protein 9 (387 aa).

Disordered stretches follow at residues 1 to 25 (MAGRSVRVPRRGSAGTQSRGQLAAG) and 58 to 133 (REQQ…LKYP). 2 stretches are compositionally biased toward polar residues: residues 70–91 (ALTTSCKEEGGSSSRDLLSSEG) and 103–115 (KNTGPVNKIQNRL). A coiled-coil region spans residues 184-347 (IGTEAQIRFL…ERQKGELMIG (164 aa)).

As to expression, testis-specific.

It is found in the cytoplasm. It localises to the cytoskeleton. The protein resides in the microtubule organizing center. The protein localises to the centrosome. Its subcellular location is the centriolar satellite. This is Testis-expressed protein 9 (Tex9) from Mus musculus (Mouse).